The sequence spans 105 residues: Large ribosomal subunit protein uL24 (105 aa).

Belongs to the universal ribosomal protein uL24 family. In terms of assembly, part of the 50S ribosomal subunit.

Its function is as follows. One of two assembly initiator proteins, it binds directly to the 5'-end of the 23S rRNA, where it nucleates assembly of the 50S subunit. One of the proteins that surrounds the polypeptide exit tunnel on the outside of the subunit. The chain is Large ribosomal subunit protein uL24 from Lachnoclostridium phytofermentans (strain ATCC 700394 / DSM 18823 / ISDg) (Clostridium phytofermentans).